We begin with the raw amino-acid sequence, 526 residues long: Arylsulfatase G (526 aa).

The signal sequence occupies residues 1-16 (MGWLFLKVLLVGMVFS). Residues aspartate 44, aspartate 45, and cysteine 84 each contribute to the Ca(2+) site. The Nucleophile role is filled by cysteine 84. Residue cysteine 84 is modified to 3-oxoalanine (Cys). A glycan (N-linked (GlcNAc...) asparagine) is linked at asparagine 117. Lysine 137 lines the substrate pocket. The active site involves histidine 139. Serine 162 serves as a coordination point for substrate. Asparagine 215 carries an N-linked (GlcNAc...) asparagine glycan. Histidine 251 is a binding site for substrate. Ca(2+)-binding residues include aspartate 302 and asparagine 303. 2 N-linked (GlcNAc...) asparagine glycosylation sites follow: asparagine 356 and asparagine 497.

This sequence belongs to the sulfatase family. It depends on Ca(2+) as a cofactor. N-glycosylated with both high mannose and complex type sugars. In terms of processing, the conversion to 3-oxoalanine (also known as C-formylglycine, FGly), of a serine or cysteine residue in prokaryotes and of a cysteine residue in eukaryotes, is critical for catalytic activity. Post-translationally, 63-kDa precursor undergoes proteolytic processing in two steps, yielding two fragments in the first step (apparent molecular masses of 44 and 18 kDa). In the second step, the 44-kDa fragment is processed further to the 34- and 10-kDa chains. The 10-kDa chain is a cleavage product of the 44-kDa fragment but linked to the 18-kDa chain through a disulfide bridge.

The protein localises to the lysosome. The catalysed reaction is an aryl sulfate + H2O = a phenol + sulfate + H(+). It carries out the reaction Hydrolysis of the 3-sulfate groups of the N-sulfo-D-glucosamine 3-O-sulfate units of heparin.. Displays arylsulfatase activity at acidic pH towards the artificial substrate p-nitrocatechol sulfate. Catalyzes the hydrolysis of the 3-sulfate groups of the N-sulfo-D-glucosamine 3-O-sulfate units of heparin. This Rattus norvegicus (Rat) protein is Arylsulfatase G (Arsg).